The chain runs to 226 residues: Ribose-5-phosphate isomerase A (226 aa).

Residues 26–29 (TGST), 82–85 (DGAD), and 95–98 (KGGG) contribute to the substrate site. Catalysis depends on glutamate 104, which acts as the Proton acceptor. Lysine 122 contributes to the substrate binding site.

The protein belongs to the ribose 5-phosphate isomerase family. In terms of assembly, homodimer.

The enzyme catalyses aldehydo-D-ribose 5-phosphate = D-ribulose 5-phosphate. It participates in carbohydrate degradation; pentose phosphate pathway; D-ribose 5-phosphate from D-ribulose 5-phosphate (non-oxidative stage): step 1/1. Catalyzes the reversible conversion of ribose-5-phosphate to ribulose 5-phosphate. This is Ribose-5-phosphate isomerase A from Streptococcus uberis (strain ATCC BAA-854 / 0140J).